The sequence spans 193 residues: Early light-induced protein 2, chloroplastic (193 aa).

Residues 1-43 (MATASFNMQSVFAAPSGVLTTRNIRNTNQLFFKRIAPVGVRCM) constitute a chloroplast transit peptide. Residues 46 to 80 (GDPIKEDPSVPSTSTSATPPQMPQSPPPPVSKPKV) are disordered. The span at 54 to 64 (SVPSTSTSATP) shows a compositional bias: low complexity. Pro residues predominate over residues 65 to 76 (PQMPQSPPPPVS). 3 helical membrane passes run 102–122 (LAMV…ENVF), 129–149 (GVGW…VPLF), and 173–193 (FAML…GTLV).

The protein belongs to the ELIP/psbS family.

The protein resides in the plastid. It is found in the chloroplast thylakoid membrane. Functionally, probably involved in the integration of pigments into the mature light-harvesting pigment-protein complexes. Light-harvesting chlorophyll (LHC) a/b-binding protein required to ensure a high rate of chlorophyll accumulation during deetiolation in continuous high light. Involved in seed germination. May fulfill a photoprotective functions. Prevents excess accumulation of free chlorophyll by inhibiting the entire chlorophyll biosynthesis pathway (e.g. 5-aminolevulinate synthesis and Mg-protoporphyrin IX chelatase activity), and hence prevent photooxidative stress. In Arabidopsis thaliana (Mouse-ear cress), this protein is Early light-induced protein 2, chloroplastic.